The following is a 260-amino-acid chain: Transmembrane protein 106C (260 aa).

Gly-2 is lipidated: N-myristoyl glycine. Residues 85 to 105 (YVLLSVLLCLLASGLVFFFLF) traverse the membrane as a helical segment. N-linked (GlcNAc...) asparagine glycosylation occurs at Asn-184. Residues 196-216 (SYVYFYCTLPAIRVHNIVIFM) traverse the membrane as a helical segment.

The protein belongs to the TMEM106 family. Interacts with TMEM106B.

The protein resides in the endoplasmic reticulum membrane. Its subcellular location is the membrane. The protein is Transmembrane protein 106C (Tmem106c) of Mus musculus (Mouse).